Reading from the N-terminus, the 645-residue chain is Threonine--tRNA ligase (645 aa).

The 63-residue stretch at 1 to 63 (MNQINIQFPD…EQDGAIEIIT (63 aa)) folds into the TGS domain. The tract at residues 242–540 (DHRKIGKDLE…LTEETKGAFP (299 aa)) is catalytic. Zn(2+) contacts are provided by Cys336, His387, and His517.

It belongs to the class-II aminoacyl-tRNA synthetase family. As to quaternary structure, homodimer. Requires Zn(2+) as cofactor.

It localises to the cytoplasm. The catalysed reaction is tRNA(Thr) + L-threonine + ATP = L-threonyl-tRNA(Thr) + AMP + diphosphate + H(+). Functionally, catalyzes the attachment of threonine to tRNA(Thr) in a two-step reaction: L-threonine is first activated by ATP to form Thr-AMP and then transferred to the acceptor end of tRNA(Thr). Also edits incorrectly charged L-seryl-tRNA(Thr). This Staphylococcus epidermidis (strain ATCC 35984 / DSM 28319 / BCRC 17069 / CCUG 31568 / BM 3577 / RP62A) protein is Threonine--tRNA ligase.